Consider the following 329-residue polypeptide: POU domain, class 5, transcription factor 2 (329 aa).

Positions 1 to 14 are enriched in polar residues; sequence MAGRRSSNVFPLSG. The segment at 1–24 is disordered; sequence MAGRRSSNVFPLSGNSGGGLEVDT. Residues 107–181 enclose the POU-specific domain; it reads DVSAIQKEME…LLKMWLEEVD (75 aa). A DNA-binding region (homeobox) is located at residues 199–258; sequence RKRRRASRERRIGSNLEKLFLQCPEPTPQQISYIAGRLRLQKDLVQVWFSNRSQMGSWPT.

The protein belongs to the POU transcription factor family. Class-5 subfamily. In terms of tissue distribution, in adult brain, expressed in the olfactory bulb, becoming specifically concentrated in the mitral cell layer. Also found in the pyramidal cell layer of the hippocampus, in the granule cell layer of the cerebellum and in the cortex.

It is found in the nucleus. Its function is as follows. Transcription factor that binds preferentially to the octamer motif (5'-ATGTTAAT-3'). May exert a regulatory function in meiotic events that are required for terminal differentiation of male germ cell. In Mus musculus (Mouse), this protein is POU domain, class 5, transcription factor 2 (Pou5f2).